A 70-amino-acid chain; its full sequence is Putative venom toxin Ts29 (70 aa).

The N-terminal stretch at 1-20 (MSPLFVVLLIATTTFYHSDA) is a signal peptide.

In terms of tissue distribution, expressed by the venom gland.

Its subcellular location is the secreted. The protein is Putative venom toxin Ts29 of Tityus serrulatus (Brazilian scorpion).